The sequence spans 149 residues: Oligosaccharyltransferase complex subunit OSTC (149 aa).

Topologically, residues 1–32 (MESLYRVPFLVLECPNLKLKKPPWVHMPSAMT) are cytoplasmic. Residues 33–53 (VYALVVVSYFLITGGIIYDVI) form a helical membrane-spanning segment. Topologically, residues 54–83 (VEPPSVGSVTDEHGHQRPVAFLAYRVNGQY) are extracellular. Residues 84–104 (IMEGLASSFLFTMGGLGFIIL) traverse the membrane as a helical segment. At 105 to 117 (DRSNAPNIPKLNR) the chain is on the cytoplasmic side. A helical transmembrane segment spans residues 118–138 (FLLLFIGFVCVLLSFFMARVF). At 139–149 (MRMKLPGYLMG) the chain is on the extracellular side.

It belongs to the OSTC family. Component of STT3A-containing oligosaccharyl transferase (OST-A) complex. STT3A-containing complex assembly occurs through the formation of 3 subcomplexes. Subcomplex 1 contains RPN1 and TMEM258, subcomplex 2 contains the STT3A-specific subunits STT3A, DC2/OSTC, and KCP2 as well as the core subunit OST4, and subcomplex 3 contains RPN2, DAD1, and OST48. The OST-A complex can form stable complexes with the Sec61 complex or with both the Sec61 and TRAP complexes. Interacts with PSEN1 and NCSTN; indicative for an association with the gamma-secretase complex.

The protein resides in the endoplasmic reticulum. It localises to the membrane. Its pathway is protein modification; protein glycosylation. Subunit of STT3A-containing oligosaccharyl transferase (OST-A) complex that catalyzes the initial transfer of a defined glycan (Glc(3)Man(9)GlcNAc(2) in eukaryotes) from the lipid carrier dolichol-pyrophosphate to an asparagine residue within an Asn-X-Ser/Thr consensus motif in nascent polypeptide chains, the first step in protein N-glycosylation. N-glycosylation occurs cotranslationally and the complex associates with the Sec61 complex at the channel-forming translocon complex that mediates protein translocation across the endoplasmic reticulum (ER). Within the OST-A complex, acts as an adapter that anchors the OST-A complex to the Sec61 complex. May be involved in N-glycosylation of APP (amyloid-beta precursor protein). Can modulate gamma-secretase cleavage of APP by enhancing endoprotelysis of PSEN1. In Bos taurus (Bovine), this protein is Oligosaccharyltransferase complex subunit OSTC.